Reading from the N-terminus, the 315-residue chain is Methionyl-tRNA formyltransferase (315 aa).

113–116 provides a ligand contact to (6S)-5,6,7,8-tetrahydrofolate; sequence SLLP.

Belongs to the Fmt family.

It catalyses the reaction L-methionyl-tRNA(fMet) + (6R)-10-formyltetrahydrofolate = N-formyl-L-methionyl-tRNA(fMet) + (6S)-5,6,7,8-tetrahydrofolate + H(+). Attaches a formyl group to the free amino group of methionyl-tRNA(fMet). The formyl group appears to play a dual role in the initiator identity of N-formylmethionyl-tRNA by promoting its recognition by IF2 and preventing the misappropriation of this tRNA by the elongation apparatus. This Klebsiella pneumoniae (strain 342) protein is Methionyl-tRNA formyltransferase.